The sequence spans 734 residues: MALRFPRFSQGLAQDPTTRRIWFGIATAHDFESHDDITEERLYQNIFASHFGQLAIIFLWTSGNLFHVAWQGNFEAWVQDPLHVRPIAHAIWDPHFGQPAVEAFTRGGAPGPVNIAYSGVYQWWYTIGLRTNEDLYTGALFLLFLSALSLIAGWLHLQPKWKPSVSWFKNAESRLNHHLSGLFGVSSLAWTGHLVHVAIPGSRGEYVRWNNFLDVLPHPQGLGPFFSGQWNLYAQNPDSSSHLFGTSQGSGTAILTLLGGFHPQTQSLWLTDIAHHHLAIAILFLIAGHMYRTNFGIGHSIKDLLEAHIPPGGRLGRGHKGLYDTINNSIHFQLGLALASLGVITSLVAQHMYSLPAYAFIAQDFTTQAALYTHHQYIAGFIMTGAFAHGAIFFIRDYNPEQNEDNVLARMLDHKEAIISHLSWASLFLGFHTLGLYVHNDVMLAFGTPEKQILIEPIFAQWIQSAHGKTSYGFDVLLSSTNGPAFNAGRSIWLPGWLNAVNENSNSLFLTIGPGDFLVHHAIALGLHTTTLILVKGALDARGSKLMPDKKDFGYSFPCDGPGRGGTCDISAWDAFYLAVFWMLNTIGWVTFYWHWKHITLWQGNVSQFNESSTYLMGWLRDYLWLNSSQLINGYNPFGMNSLSVWAWMFLFGHLVWATGFMFLISWRGYWQELIETLAWAHERTPLANLIRWRDKPVALSIVQARLVGLAHFSVGYIFTYAAFLIASTSGKFG.

8 helical membrane-spanning segments follow: residues 46–69 (IFASHFGQLAIIFLWTSGNLFHVA), 135–158 (LYTGALFLLFLSALSLIAGWLHLQ), 175–199 (LNHHLSGLFGVSSLAWTGHLVHVAI), 273–291 (IAHHHLAIAILFLIAGHMY), 330–353 (IHFQLGLALASLGVITSLVAQHMY), 369–395 (AALYTHHQYIAGFIMTGAFAHGAIFFI), 417–439 (AIISHLSWASLFLGFHTLGLYVH), and 517–535 (FLVHHAIALGLHTTTLILV). [4Fe-4S] cluster contacts are provided by cysteine 559 and cysteine 568. Transmembrane regions (helical) follow at residues 575 to 596 (AFYLAVFWMLNTIGWVTFYWHW) and 643 to 665 (LSVWAWMFLFGHLVWATGFMFLI). Histidine 654, methionine 662, and tyrosine 670 together coordinate chlorophyll a. Tryptophan 671 contributes to the phylloquinone binding site. Residues 707–727 (LVGLAHFSVGYIFTYAAFLIA) traverse the membrane as a helical segment.

It belongs to the PsaA/PsaB family. In terms of assembly, the PsaA/B heterodimer binds the P700 chlorophyll special pair and subsequent electron acceptors. PSI consists of a core antenna complex that captures photons, and an electron transfer chain that converts photonic excitation into a charge separation. The eukaryotic PSI reaction center is composed of at least 11 subunits. P700 is a chlorophyll a/chlorophyll a' dimer, A0 is one or more chlorophyll a, A1 is one or both phylloquinones and FX is a shared 4Fe-4S iron-sulfur center. is required as a cofactor.

The protein localises to the plastid. It localises to the chloroplast thylakoid membrane. The catalysed reaction is reduced [plastocyanin] + hnu + oxidized [2Fe-2S]-[ferredoxin] = oxidized [plastocyanin] + reduced [2Fe-2S]-[ferredoxin]. PsaA and PsaB bind P700, the primary electron donor of photosystem I (PSI), as well as the electron acceptors A0, A1 and FX. PSI is a plastocyanin-ferredoxin oxidoreductase, converting photonic excitation into a charge separation, which transfers an electron from the donor P700 chlorophyll pair to the spectroscopically characterized acceptors A0, A1, FX, FA and FB in turn. Oxidized P700 is reduced on the lumenal side of the thylakoid membrane by plastocyanin. This is Photosystem I P700 chlorophyll a apoprotein A2 from Gossypium hirsutum (Upland cotton).